We begin with the raw amino-acid sequence, 1130 residues long: Tyrosine-protein kinase ABL1 (1130 aa).

Residues 1–60 (MLEICLKLVGCKSKKGLSSSSSCYLEEALQRPVASDFEPQGLSEAARWNSKENLLAGPSE) form a CAP region. L2 carries N-myristoyl glycine lipidation. S50 is modified (phosphoserine). An SH3 domain is found at 61 to 121 (NDPNLFVALY…PSNYITPVNS (61 aa)). A Phosphotyrosine; by autocatalysis modification is found at Y70. Y115, Y128, Y139, Y172, Y185, and Y215 each carry phosphotyrosine. One can recognise an SH2 domain in the interval 127–217 (WYHGPVSRNA…GLITTLHYPA (91 aa)). Y226 carries the post-translational modification Phosphotyrosine; by autocatalysis. S229 is subject to Phosphoserine. The Protein kinase domain maps to 242–493 (ITMKHKLGGG…PSFAEIHQAF (252 aa)). 248 to 256 (LGGGQYGEV) is an ATP binding site. Phosphotyrosine is present on residues Y253 and Y257. Residues K271 and 316-322 (EFMTYGN) contribute to the ATP site. The active-site Proton acceptor is D363. A Kinase activation loop motif is present at residues 381-405 (DFGLSRLMTGDTYTAHAGAKFPIKW). Y393 is modified (phosphotyrosine; by autocatalysis and SRC-type Tyr-kinases). Y413 is modified (phosphotyrosine). 3 positions are modified to phosphoserine: S446, S559, and S569. The disordered stretch occupies residues 518–996 (AVSTLLQAPE…SASSALAGDQ (479 aa)). A compositionally biased stretch (basic and acidic residues) spans 537 to 566 (RAAEHRDTTDVPEMPHSKGQGESDPLDHEP). The segment covering 586-597 (EDERLLPKDKKT) has biased composition (basic and acidic residues). Positions 605–609 (KKKKK) match the Nuclear localization signal 1 motif. Phosphoserine; by PAK2 occurs at positions 618 and 619. Phosphoserine occurs at positions 620, 659, and 683. The span at 620-640 (SFREMDGQPERRGAGEEEGRD) shows a compositional bias: basic and acidic residues. Residues 689 to 698 (KSSTLTSSRL) show a composition bias toward polar residues. Residues 709–715 (SSKRFLR) carry the Nuclear localization signal 2 motif. At K711 the chain carries N6-acetyllysine; by EP300. A Phosphoserine modification is found at S718. A phosphothreonine mark is found at T735 and T751. Residues 740–752 (LQSTGRQFDSSTF) show a composition bias toward polar residues. The segment covering 755–774 (HKSEKPALPRKRAGENRSDQ) has biased composition (basic and acidic residues). A Nuclear localization signal 3 motif is present at residues 762–769 (LPRKRAGE). T781 is modified (phosphothreonine). A compositionally biased stretch (basic and acidic residues) spans 788–802 (KKNEEAADEVFKDIM). Phosphothreonine is present on residues T814, T823, T844, and T852. The residue at position 855 (S855) is a Phosphoserine. The segment at 869-968 (PAEESRVRRH…VLPATPKPQS (100 aa)) is DNA-binding. Positions 881–891 (SSESPGRDKGK) are enriched in basic and acidic residues. Low complexity predominate over residues 905–915 (ASAGKAGGKPS). S917 is modified (phosphoserine). Positions 953–1130 (EGLKKPVLPA…VKEISDIVQR (178 aa)) are F-actin-binding. Over residues 965-975 (KPQSAKPSGTP) the composition is skewed to polar residues. Residue S977 is modified to Phosphoserine. The span at 984–993 (TLPSASSALA) shows a compositional bias: low complexity. A Nuclear export signal motif is present at residues 1090 to 1100 (LENNLRELQIC).

This sequence belongs to the protein kinase superfamily. Tyr protein kinase family. ABL subfamily. Interacts with SORBS1 following insulin stimulation. Found in a trimolecular complex containing CDK5 and CABLES1. Interacts with CABLES1 and PSTPIP1. Interacts with ZDHHC16, ITGB1 and HCK. Interacts with STX17; probably phosphorylates STX17. Interacts with INPPL1/SHIP2. Interacts with the 14-3-3 proteins, YWHAB, YWHAE, YWHAG, YWHAH, SFN and YWHAZ; the interaction with 14-3-3 proteins requires phosphorylation on Thr-735 and, sequesters ABL1 into the cytoplasm. Interacts with ABI1, ABI2, BCR, CRK, FGR, FYN, HCK, LYN, PSMA7 RAD9A, RAD51, RAD52, TP73 and WASF3. A complex made of ABL1, CTTN and MYLK regulates cortical actin-based cytoskeletal rearrangement critical to sphingosine 1-phosphate (S1P)-mediated endothelial cell (EC) barrier enhancement. Interacts (via SH3 domain) with CASP9; the interaction is direct and increases in the response of cells to genotoxic stress and ABL1/c-Abl activation. Found in a complex with ABL1, ABL2, CRK and UNC119; leading to the inhibition of CRK phosphorylation by ABL kinases. Interacts with TBX21. Interacts with NEDD9/HEF1; interaction is induced by CXCL12 promotion of ABL-mediated phosphorylation of NEDD9/HEF1. Requires Mg(2+) as cofactor. Acetylated at Lys-711 by EP300 which promotes the cytoplasmic translocation. Post-translationally, phosphorylation at Tyr-70 by members of the SRC family of kinases disrupts SH3 domain-based autoinhibitory interactions and intermolecular associations, such as that with ABI1, and also enhances kinase activity. Phosphorylation at Tyr-226 and Tyr-393 correlate with increased activity. DNA damage-induced activation of ABL1 requires the function of ATM and Ser-446 phosphorylation. Phosphorylation at Ser-569 has been attributed to a CDC2-associated kinase and is coupled to cell division. Phosphorylation at Ser-618 and Ser-619 by PAK2 increases binding to CRK and reduces binding to ABI1. Phosphorylation on Thr-735 is required for binding 14-3-3 proteins for cytoplasmic translocation. Phosphorylated by PRKDC. In terms of processing, polyubiquitinated. Polyubiquitination of ABL1 leads to degradation. Widely expressed.

It localises to the cytoplasm. It is found in the cytoskeleton. The protein resides in the nucleus. Its subcellular location is the mitochondrion. The protein localises to the nucleus membrane. It catalyses the reaction L-tyrosyl-[protein] + ATP = O-phospho-L-tyrosyl-[protein] + ADP + H(+). Its activity is regulated as follows. Stabilized in the inactive form by an association between the SH3 domain and the SH2-TK linker region, interactions of the N-terminal cap, and contributions from an N-terminal myristoyl group and phospholipids. Activated by autophosphorylation as well as by SRC-family kinase-mediated phosphorylation. Activated by RIN1 binding to the SH2 and SH3 domains. Also stimulated by cell death inducers and DNA-damage. Phosphatidylinositol 4,5-bisphosphate (PIP2), a highly abundant phosphoinositide known to regulate cytoskeletal and membrane proteins, also inhibits the tyrosine kinase activity. Activated by 5-(1,3-diaryl-1H-pyrazol-4-yl)hydantoin, 5-[3-(4-fluorophenyl)-1-phenyl-1H-pyrazol-4-yl]-2,4-imidazolidinedione (DPH). Inhibited by ABI1, whose activity is controlled by ABL1 itself through tyrosine phosphorylation. Also inhibited by imatinib mesylate (Gleevec) which is used for the treatment of chronic myeloid leukemia (CML), and by VX-680, an inhibitor that also acts on imatinib-resistant mutants. Its function is as follows. Non-receptor tyrosine-protein kinase that plays a role in many key processes linked to cell growth and survival such as cytoskeleton remodeling in response to extracellular stimuli, cell motility and adhesion, receptor endocytosis, autophagy, DNA damage response and apoptosis. Coordinates actin remodeling through tyrosine phosphorylation of proteins controlling cytoskeleton dynamics like WASF3 (involved in branch formation); ANXA1 (involved in membrane anchoring); DBN1, DBNL, CTTN, RAPH1 and ENAH (involved in signaling); or MAPT and PXN (microtubule-binding proteins). Phosphorylation of WASF3 is critical for the stimulation of lamellipodia formation and cell migration. Involved in the regulation of cell adhesion and motility through phosphorylation of key regulators of these processes such as BCAR1, CRK, CRKL, DOK1, EFS or NEDD9. Phosphorylates multiple receptor tyrosine kinases and more particularly promotes endocytosis of EGFR, facilitates the formation of neuromuscular synapses through MUSK, inhibits PDGFRB-mediated chemotaxis and modulates the endocytosis of activated B-cell receptor complexes. Other substrates which are involved in endocytosis regulation are the caveolin (CAV1) and RIN1. Moreover, ABL1 regulates the CBL family of ubiquitin ligases that drive receptor down-regulation and actin remodeling. Phosphorylation of CBL leads to increased EGFR stability. Involved in late-stage autophagy by regulating positively the trafficking and function of lysosomal components. ABL1 targets to mitochondria in response to oxidative stress and thereby mediates mitochondrial dysfunction and cell death. In response to oxidative stress, phosphorylates serine/threonine kinase PRKD2 at 'Tyr-717'. ABL1 is also translocated in the nucleus where it has DNA-binding activity and is involved in DNA-damage response and apoptosis. Many substrates are known mediators of DNA repair: DDB1, DDB2, ERCC3, ERCC6, RAD9A, RAD51, RAD52 or WRN. Activates the proapoptotic pathway when the DNA damage is too severe to be repaired. Phosphorylates TP73, a primary regulator for this type of damage-induced apoptosis. Phosphorylates the caspase CASP9 on 'Tyr-153' and regulates its processing in the apoptotic response to DNA damage. Phosphorylates PSMA7 that leads to an inhibition of proteasomal activity and cell cycle transition blocks. ABL1 also acts as a regulator of multiple pathological signaling cascades during infection. Several known tyrosine-phosphorylated microbial proteins have been identified as ABL1 substrates. This is the case of A36R of Vaccinia virus, Tir (translocated intimin receptor) of pathogenic E.coli and possibly Citrobacter, CagA (cytotoxin-associated gene A) of H.pylori, or AnkA (ankyrin repeat-containing protein A) of A.phagocytophilum. Pathogens can highjack ABL1 kinase signaling to reorganize the host actin cytoskeleton for multiple purposes, like facilitating intracellular movement and host cell exit. Finally, functions as its own regulator through autocatalytic activity as well as through phosphorylation of its inhibitor, ABI1. Regulates T-cell differentiation in a TBX21-dependent manner. Positively regulates chemokine-mediated T-cell migration, polarization, and homing to lymph nodes and immune-challenged tissues, potentially via activation of NEDD9/HEF1 and RAP1. Phosphorylates TBX21 on tyrosine residues leading to an enhancement of its transcriptional activator activity. The chain is Tyrosine-protein kinase ABL1 (ABL1) from Homo sapiens (Human).